The sequence spans 127 residues: S-adenosylmethionine decarboxylase proenzyme 2 (127 aa).

The active-site Schiff-base intermediate with substrate; via pyruvic acid is Ser-63. At Ser-63 the chain carries Pyruvic acid (Ser); by autocatalysis. The active-site Proton acceptor; for processing activity is His-68. Cys-83 functions as the Proton donor; for catalytic activity in the catalytic mechanism.

The protein belongs to the prokaryotic AdoMetDC family. Type 1 subfamily. Heterotetramer of two alpha and two beta chains arranged as a dimer of alpha/beta heterodimers. It depends on pyruvate as a cofactor. Post-translationally, is synthesized initially as an inactive proenzyme. Formation of the active enzyme involves a self-maturation process in which the active site pyruvoyl group is generated from an internal serine residue via an autocatalytic post-translational modification. Two non-identical subunits are generated from the proenzyme in this reaction, and the pyruvate is formed at the N-terminus of the alpha chain, which is derived from the carboxyl end of the proenzyme. The post-translation cleavage follows an unusual pathway, termed non-hydrolytic serinolysis, in which the side chain hydroxyl group of the serine supplies its oxygen atom to form the C-terminus of the beta chain, while the remainder of the serine residue undergoes an oxidative deamination to produce ammonia and the pyruvoyl group blocking the N-terminus of the alpha chain.

It catalyses the reaction S-adenosyl-L-methionine + H(+) = S-adenosyl 3-(methylsulfanyl)propylamine + CO2. The protein operates within amine and polyamine biosynthesis; S-adenosylmethioninamine biosynthesis; S-adenosylmethioninamine from S-adenosyl-L-methionine: step 1/1. Functionally, catalyzes the decarboxylation of S-adenosylmethionine to S-adenosylmethioninamine (dcAdoMet), the propylamine donor required for the synthesis of the polyamines spermine and spermidine from the diamine putrescine. The sequence is that of S-adenosylmethionine decarboxylase proenzyme 2 from Halalkalibacterium halodurans (strain ATCC BAA-125 / DSM 18197 / FERM 7344 / JCM 9153 / C-125) (Bacillus halodurans).